We begin with the raw amino-acid sequence, 190 residues long: Ganglioside GM2 activator (190 aa).

An N-terminal signal peptide occupies residues 1-23; that stretch reads MQSLMQAPVLIALGLLFAAPAQA. Cystine bridges form between Cys36-Cys180, Cys96-Cys103, Cys109-Cys135, and Cys122-Cys133. Asn60 is a glycosylation site (N-linked (GlcNAc...) asparagine).

Its subcellular location is the lysosome. The catalysed reaction is cholesterol(in) = cholesterol(out). The large binding pocket can accommodate several single chain phospholipids and fatty acids, GM2A also exhibits some calcium-independent phospholipase activity. Binds gangliosides and stimulates ganglioside GM2 degradation. It stimulates only the breakdown of ganglioside GM2 and glycolipid GA2 by beta-hexosaminidase A. It extracts single GM2 molecules from membranes and presents them in soluble form to beta-hexosaminidase A for cleavage of N-acetyl-D-galactosamine and conversion to GM3. Has cholesterol transfer activity. The polypeptide is Ganglioside GM2 activator (GM2A) (Macaca fascicularis (Crab-eating macaque)).